The following is a 672-amino-acid chain: tRNA 5-methylaminomethyl-2-thiouridine biosynthesis bifunctional protein MnmC (672 aa).

The segment at 1 to 235 (MTRVLEPAEP…KRDMTVARFA (235 aa)) is tRNA (mnm(5)s(2)U34)-methyltransferase. Residues 259-672 (IGAGLAGCAV…SAGPGVDAAG (414 aa)) are FAD-dependent cmnm(5)s(2)U34 oxidoreductase.

It in the N-terminal section; belongs to the methyltransferase superfamily. tRNA (mnm(5)s(2)U34)-methyltransferase family. The protein in the C-terminal section; belongs to the DAO family. It depends on FAD as a cofactor.

It is found in the cytoplasm. It carries out the reaction 5-aminomethyl-2-thiouridine(34) in tRNA + S-adenosyl-L-methionine = 5-methylaminomethyl-2-thiouridine(34) in tRNA + S-adenosyl-L-homocysteine + H(+). Functionally, catalyzes the last two steps in the biosynthesis of 5-methylaminomethyl-2-thiouridine (mnm(5)s(2)U) at the wobble position (U34) in tRNA. Catalyzes the FAD-dependent demodification of cmnm(5)s(2)U34 to nm(5)s(2)U34, followed by the transfer of a methyl group from S-adenosyl-L-methionine to nm(5)s(2)U34, to form mnm(5)s(2)U34. This is tRNA 5-methylaminomethyl-2-thiouridine biosynthesis bifunctional protein MnmC from Cupriavidus metallidurans (strain ATCC 43123 / DSM 2839 / NBRC 102507 / CH34) (Ralstonia metallidurans).